The following is a 287-amino-acid chain: Protein UL24 homolog (287 aa).

Disordered regions lie at residues 1–33 and 254–287; these read MARR…FSRR and RVGK…DSNL. A compositionally biased stretch (basic residues) spans 16–33; sequence HRSRTRSKTAHHRKFSRR.

This sequence belongs to the herpesviridae UL24 family.

It localises to the virion. The protein resides in the host cytoplasm. The protein localises to the host nucleus. Its subcellular location is the host nucleolus. It is found in the host Golgi apparatus. Its function is as follows. May participate in nuclear egress of viral particles. Plays a role in the dispersal of several host nucleolar proteins including NCL/nucleolin and NPM1. Since deletion of host NCL/nucleolin negatively impact on nuclear egress, UL24 supposedly acts on this process through its effect on host nucleoli. The sequence is that of Protein UL24 homolog from Infectious laryngotracheitis virus (strain Thorne V882) (ILTV).